Consider the following 538-residue polypeptide: Putative cysteine ligase BshC (538 aa).

Positions Ile-248–Leu-268 form a coiled coil.

This sequence belongs to the BshC family.

Functionally, involved in bacillithiol (BSH) biosynthesis. May catalyze the last step of the pathway, the addition of cysteine to glucosamine malate (GlcN-Mal) to generate BSH. In Bacillus cereus (strain B4264), this protein is Putative cysteine ligase BshC.